Here is a 384-residue protein sequence, read N- to C-terminus: GTPase Obg (384 aa).

An Obg domain is found at 1–159; it reads MKFIDEAKIE…RSLQLELKVL (159 aa). The interval 20-46 is disordered; the sequence is ATSFRREKFVPRGGPDGGDGGKGGSVW. Residues 33–43 show a composition bias toward gly residues; it reads GPDGGDGGKGG. The OBG-type G domain occupies 160 to 348; that stretch reads ADVGLLGMPN…LVHQINQYLT (189 aa). GTP is bound by residues 166–173, 191–195, 213–216, 284–287, and 329–331; these read GMPNAGKS, FTTLH, DIPG, NKLD, and SAL. Residues S173 and T193 each contribute to the Mg(2+) site.

It belongs to the TRAFAC class OBG-HflX-like GTPase superfamily. OBG GTPase family. In terms of assembly, monomer. Requires Mg(2+) as cofactor.

It is found in the cytoplasm. Its function is as follows. An essential GTPase which binds GTP, GDP and possibly (p)ppGpp with moderate affinity, with high nucleotide exchange rates and a fairly low GTP hydrolysis rate. Plays a role in control of the cell cycle, stress response, ribosome biogenesis and in those bacteria that undergo differentiation, in morphogenesis control. The sequence is that of GTPase Obg from Neisseria meningitidis serogroup C (strain 053442).